A 299-amino-acid chain; its full sequence is Tyrosine recombinase XerC (299 aa).

The Core-binding (CB) domain occupies 1-85; it reads MEQHLDAYCM…AVRGFYKYLN (85 aa). The Tyr recombinase domain maps to 106-285; that stretch reads RLPKTLDTDR…DFQHLATVYD (180 aa). Catalysis depends on residues Arg146, Lys170, His237, Arg240, and His263. The O-(3'-phospho-DNA)-tyrosine intermediate role is filled by Tyr272.

Belongs to the 'phage' integrase family. XerC subfamily. As to quaternary structure, forms a cyclic heterotetrameric complex composed of two molecules of XerC and two molecules of XerD.

It localises to the cytoplasm. In terms of biological role, site-specific tyrosine recombinase, which acts by catalyzing the cutting and rejoining of the recombining DNA molecules. The XerC-XerD complex is essential to convert dimers of the bacterial chromosome into monomers to permit their segregation at cell division. It also contributes to the segregational stability of plasmids. The protein is Tyrosine recombinase XerC of Pseudomonas syringae pv. tomato (strain ATCC BAA-871 / DC3000).